Here is a 402-residue protein sequence, read N- to C-terminus: S-adenosylmethionine synthase (402 aa).

Position 15 (His-15) interacts with ATP. Position 17 (Asp-17) interacts with Mg(2+). Residue Glu-43 coordinates K(+). 2 residues coordinate L-methionine: Glu-56 and Gln-99. The flexible loop stretch occupies residues 99–109 (QSPDIAQGVDT). ATP is bound by residues 174–176 (DGK), 247–248 (RF), Asp-256, 262–263 (RK), Ala-279, and Lys-283. Asp-256 lines the L-methionine pocket. An L-methionine-binding site is contributed by Lys-287.

The protein belongs to the AdoMet synthase family. Homotetramer; dimer of dimers. The cofactor is Mg(2+). K(+) serves as cofactor.

It is found in the cytoplasm. The catalysed reaction is L-methionine + ATP + H2O = S-adenosyl-L-methionine + phosphate + diphosphate. The protein operates within amino-acid biosynthesis; S-adenosyl-L-methionine biosynthesis; S-adenosyl-L-methionine from L-methionine: step 1/1. In terms of biological role, catalyzes the formation of S-adenosylmethionine (AdoMet) from methionine and ATP. The overall synthetic reaction is composed of two sequential steps, AdoMet formation and the subsequent tripolyphosphate hydrolysis which occurs prior to release of AdoMet from the enzyme. This is S-adenosylmethionine synthase from Streptomyces griseus subsp. griseus (strain JCM 4626 / CBS 651.72 / NBRC 13350 / KCC S-0626 / ISP 5235).